The following is a 500-amino-acid chain: NAD(P)H-quinone oxidoreductase chain 4, chloroplastic (500 aa).

Helical transmembrane passes span 4–24, 35–55, 87–107, 134–154, 167–187, 208–228, 242–262, 272–292, 305–325, 330–350, 364–384, 386–406, 416–436, and 462–482; these read FPWLTLIVIFPISAGSFLFFL, YTLCVCSLELLLTTYTFCYHF, FGPILLTGFITTLATLAAWPV, LLLFFMMWELELIPVYLLLSM, FILYTAGSSIFLLIGVLGIGL, ALEIIFYIGFLIAFAVKSPII, HYSTCMLLAGILLKMGAYGLV, AHSIFAPYLIIVGAIQIVYAA, IAYSSVSHMGFIIIGIGSITD, GALLQIISHGFIGAALFFLAG, MGGMAVAIPKIFTMFSILSMA, LALPGMSGFVAELIVFFGIIT, ILITFVMAIGMILTPIYSLSM, and LFVSISILLPVIGMGIYPDFL.

The protein belongs to the complex I subunit 4 family.

The protein resides in the plastid. It is found in the chloroplast thylakoid membrane. It carries out the reaction a plastoquinone + NADH + (n+1) H(+)(in) = a plastoquinol + NAD(+) + n H(+)(out). The catalysed reaction is a plastoquinone + NADPH + (n+1) H(+)(in) = a plastoquinol + NADP(+) + n H(+)(out). The protein is NAD(P)H-quinone oxidoreductase chain 4, chloroplastic of Pelargonium hortorum (Common geranium).